The following is a 415-amino-acid chain: Multidrug resistance protein MdtA (415 aa).

Residues 1–21 (MKGSYKSRWVIVIVVVIAAIA) form the signal peptide. 2 disordered regions span residues 32–59 (SRSAAPGATKQAQQSPAGGRRGMRSGPL) and 392–415 (EAQSATTSEEKATSREYAKKGARS). Residues 399–415 (SEEKATSREYAKKGARS) show a composition bias toward basic and acidic residues.

It belongs to the membrane fusion protein (MFP) (TC 8.A.1) family. Part of a tripartite efflux system composed of MdtA, MdtB and MdtC.

The protein resides in the cell inner membrane. In terms of biological role, the MdtABC tripartite complex confers resistance against novobiocin and deoxycholate. The chain is Multidrug resistance protein MdtA from Escherichia coli (strain SMS-3-5 / SECEC).